A 303-amino-acid polypeptide reads, in one-letter code: Glycine--tRNA ligase alpha subunit (303 aa).

This sequence belongs to the class-II aminoacyl-tRNA synthetase family. As to quaternary structure, tetramer of two alpha and two beta subunits.

Its subcellular location is the cytoplasm. The catalysed reaction is tRNA(Gly) + glycine + ATP = glycyl-tRNA(Gly) + AMP + diphosphate. The chain is Glycine--tRNA ligase alpha subunit from Streptococcus equi subsp. equi (strain 4047).